Here is a 437-residue protein sequence, read N- to C-terminus: Ribosomal protein uS12 methylthiotransferase RimO (437 aa).

The MTTase N-terminal domain occupies 4–114; the sequence is PRIGFISLGC…VMNAVHEHLP (111 aa). Residues cysteine 13, cysteine 49, cysteine 78, cysteine 145, cysteine 149, and cysteine 152 each coordinate [4Fe-4S] cluster. Positions 131 to 368 constitute a Radical SAM core domain; it reads LTPRHYAYLK…MEVQERISAA (238 aa). The region spanning 371–437 is the TRAM domain; the sequence is RTRIGRTETV…AHDLWARLAD (67 aa).

Belongs to the methylthiotransferase family. RimO subfamily. The cofactor is [4Fe-4S] cluster.

The protein localises to the cytoplasm. It catalyses the reaction L-aspartate(89)-[ribosomal protein uS12]-hydrogen + (sulfur carrier)-SH + AH2 + 2 S-adenosyl-L-methionine = 3-methylsulfanyl-L-aspartate(89)-[ribosomal protein uS12]-hydrogen + (sulfur carrier)-H + 5'-deoxyadenosine + L-methionine + A + S-adenosyl-L-homocysteine + 2 H(+). Catalyzes the methylthiolation of an aspartic acid residue of ribosomal protein uS12. The chain is Ribosomal protein uS12 methylthiotransferase RimO from Methylococcus capsulatus (strain ATCC 33009 / NCIMB 11132 / Bath).